The chain runs to 153 residues: Ubiquitin/ISG15-conjugating enzyme E2 L6 (153 aa).

The UBC core domain maps to 2–149 (MASMRVVKEL…AEEFTLRFGV (148 aa)). The active-site Glycyl thioester intermediate is cysteine 86.

This sequence belongs to the ubiquitin-conjugating enzyme family. Interacts with RNF19A, RNF19B and RNF144B. Interacts with FLT3 (tyrosine phosphorylated). ISGylated. Present in natural killer cells (at protein level).

It carries out the reaction S-ubiquitinyl-[E1 ubiquitin-activating enzyme]-L-cysteine + [E2 ubiquitin-conjugating enzyme]-L-cysteine = [E1 ubiquitin-activating enzyme]-L-cysteine + S-ubiquitinyl-[E2 ubiquitin-conjugating enzyme]-L-cysteine.. The protein operates within protein modification; protein ubiquitination. Its function is as follows. Catalyzes the covalent attachment of ubiquitin or ISG15 to other proteins. Functions in the E6/E6-AP-induced ubiquitination of p53/TP53. Promotes ubiquitination and subsequent proteasomal degradation of FLT3. The polypeptide is Ubiquitin/ISG15-conjugating enzyme E2 L6 (UBE2L6) (Homo sapiens (Human)).